The primary structure comprises 429 residues: Hydrogenobyrinate a,c-diamide synthase (429 aa).

The GATase cobBQ-type domain maps to 240-429 (RTAVARDVAF…SFMHLIDFSE (190 aa)). C323 (nucleophile) is an active-site residue.

It belongs to the CobB/CbiA family. Mg(2+) is required as a cofactor.

It carries out the reaction hydrogenobyrinate + 2 L-glutamine + 2 ATP + 2 H2O = hydrogenobyrinate a,c-diamide + 2 L-glutamate + 2 ADP + 2 phosphate + 2 H(+). The protein operates within cofactor biosynthesis; adenosylcobalamin biosynthesis; cob(II)yrinate a,c-diamide from precorrin-2 (aerobic route): step 9/10. Its function is as follows. Catalyzes the ATP-dependent amidation of the two carboxylate groups at positions a and c of hydrogenobyrinate, using either L-glutamine or ammonia as the nitrogen source. This chain is Hydrogenobyrinate a,c-diamide synthase, found in Rhizobium meliloti (strain 1021) (Ensifer meliloti).